Consider the following 156-residue polypeptide: Small ribosomal subunit protein uS7 (156 aa).

This sequence belongs to the universal ribosomal protein uS7 family. As to quaternary structure, part of the 30S ribosomal subunit. Contacts proteins S9 and S11.

One of the primary rRNA binding proteins, it binds directly to 16S rRNA where it nucleates assembly of the head domain of the 30S subunit. Is located at the subunit interface close to the decoding center, probably blocks exit of the E-site tRNA. The sequence is that of Small ribosomal subunit protein uS7 from Bacillus mycoides (strain KBAB4) (Bacillus weihenstephanensis).